Reading from the N-terminus, the 450-residue chain is tRNA modification GTPase MnmE (450 aa).

(6S)-5-formyl-5,6,7,8-tetrahydrofolate is bound by residues arginine 25, glutamate 86, and arginine 126. In terms of domain architecture, TrmE-type G spans 221 to 373; that stretch reads GLRVALVGRP…LVQALLERCG (153 aa). A K(+)-binding site is contributed by asparagine 231. GTP-binding positions include 231 to 236, 250 to 256, 275 to 278, and 336 to 339; these read NVGKSS, TDLPGTT, DTAG, and NKAD. Residue serine 235 coordinates Mg(2+). Residues threonine 250, leucine 252, and threonine 255 each contribute to the K(+) site. Position 256 (threonine 256) interacts with Mg(2+). A (6S)-5-formyl-5,6,7,8-tetrahydrofolate-binding site is contributed by lysine 450.

Belongs to the TRAFAC class TrmE-Era-EngA-EngB-Septin-like GTPase superfamily. TrmE GTPase family. In terms of assembly, homodimer. Heterotetramer of two MnmE and two MnmG subunits. The cofactor is K(+).

The protein localises to the cytoplasm. Functionally, exhibits a very high intrinsic GTPase hydrolysis rate. Involved in the addition of a carboxymethylaminomethyl (cmnm) group at the wobble position (U34) of certain tRNAs, forming tRNA-cmnm(5)s(2)U34. This Synechococcus sp. (strain CC9605) protein is tRNA modification GTPase MnmE.